The following is an 828-amino-acid chain: Isethionate sulfite-lyase (828 aa).

Residues E30 to K698 form the PFL domain. Residues R187, Q191, C466 to E468, and R676 contribute to the 2-hydroxyethane-1-sulfonate site. The active-site Cysteine radical intermediate is C466. The active-site Proton acceptor is E468. The 124-residue stretch at D705–M828 folds into the Glycine radical domain. G803 carries the post-translational modification Glycine radical.

It belongs to the glycyl radical enzyme (GRE) family. In terms of assembly, homodimer. Post-translationally, requires the activating protein IseH to generate the key active site glycyl radical on Gly-803 that is involved in catalysis.

It carries out the reaction 2-hydroxyethane-1-sulfonate = acetaldehyde + sulfite + H(+). Its pathway is organosulfur degradation; alkanesulfonate degradation. Functionally, involved in an anaerobic respiration pathway that converts the sulfonate isethionate (2-hydroxyethanesulfonate) to ammonia, acetate and sulfide. Catalyzes the radical-mediated C-S bond cleavage of isethionate (2-hydroxyethanesulfonate) to form sulfite and acetaldehyde. Shows no activity with taurine or ethanolamine as substrates. This Nitratidesulfovibrio vulgaris (strain ATCC 29579 / DSM 644 / CCUG 34227 / NCIMB 8303 / VKM B-1760 / Hildenborough) (Desulfovibrio vulgaris) protein is Isethionate sulfite-lyase.